Reading from the N-terminus, the 146-residue chain is D-aminoacyl-tRNA deacylase (146 aa).

Positions 137 to 138 match the Gly-cisPro motif, important for rejection of L-amino acids motif; that stretch reads GP.

It belongs to the DTD family. In terms of assembly, homodimer.

Its subcellular location is the cytoplasm. It catalyses the reaction glycyl-tRNA(Ala) + H2O = tRNA(Ala) + glycine + H(+). The catalysed reaction is a D-aminoacyl-tRNA + H2O = a tRNA + a D-alpha-amino acid + H(+). In terms of biological role, an aminoacyl-tRNA editing enzyme that deacylates mischarged D-aminoacyl-tRNAs. Also deacylates mischarged glycyl-tRNA(Ala), protecting cells against glycine mischarging by AlaRS. Acts via tRNA-based rather than protein-based catalysis; rejects L-amino acids rather than detecting D-amino acids in the active site. By recycling D-aminoacyl-tRNA to D-amino acids and free tRNA molecules, this enzyme counteracts the toxicity associated with the formation of D-aminoacyl-tRNA entities in vivo and helps enforce protein L-homochirality. This chain is D-aminoacyl-tRNA deacylase, found in Halalkalibacterium halodurans (strain ATCC BAA-125 / DSM 18197 / FERM 7344 / JCM 9153 / C-125) (Bacillus halodurans).